The chain runs to 487 residues: Transcription factor GTE5, chloroplastic (487 aa).

The N-terminal 32 residues, 1–32 (MSSEHISGGGASKTKKHKWSSSQNRPKPMGVS), are a transit peptide targeting the chloroplast. Disordered stretches follow at residues 1 to 48 (MSSE…NSFA), 93 to 127 (ANPG…GADK), and 400 to 487 (KNEA…DNGN). Positions 127-233 (KGTVQIFKNC…NMFEDKWVSI (107 aa)) constitute a Bromo domain. An NET domain is found at 320–401 (EEEAPVNNRD…GYKESLSKKN (82 aa)). Over residues 400–414 (KNEAHGFGSERDAES) the composition is skewed to basic and acidic residues. The span at 415–435 (VHNSIQEPTTLVSGTTTSRVT) shows a compositional bias: polar residues. The span at 451 to 487 (NNASGSSSSNSSSSDSGSCSSDTDSDSSSGRGSDNGN) shows a compositional bias: low complexity.

As to quaternary structure, interacts with SIZ1 (via PHD domain). Sumoylated by SIZ1.

The protein localises to the plastid. Its subcellular location is the chloroplast. The polypeptide is Transcription factor GTE5, chloroplastic (GTE5) (Arabidopsis thaliana (Mouse-ear cress)).